The sequence spans 678 residues: DNA ligase (678 aa).

Residues 47 to 51, 96 to 97, and E122 contribute to the NAD(+) site; these read DSDYD and SL. Residue K124 is the N6-AMP-lysine intermediate of the active site. The NAD(+) site is built by R145, E182, K300, and K324. The Zn(2+) site is built by C418, C421, C436, and C442. One can recognise a BRCT domain in the interval 602–678; it reads AYNESFTGKT…ILEDNLKDLL (77 aa).

Belongs to the NAD-dependent DNA ligase family. LigA subfamily. It depends on Mg(2+) as a cofactor. The cofactor is Mn(2+).

The enzyme catalyses NAD(+) + (deoxyribonucleotide)n-3'-hydroxyl + 5'-phospho-(deoxyribonucleotide)m = (deoxyribonucleotide)n+m + AMP + beta-nicotinamide D-nucleotide.. In terms of biological role, DNA ligase that catalyzes the formation of phosphodiester linkages between 5'-phosphoryl and 3'-hydroxyl groups in double-stranded DNA using NAD as a coenzyme and as the energy source for the reaction. It is essential for DNA replication and repair of damaged DNA. This is DNA ligase from Francisella tularensis subsp. novicida (strain U112).